The primary structure comprises 244 residues: MTDTHVPPPELPAAEEGEERPHRRIKSFVMRAGRMTEGQQRGLDQGRPLFGLSLTDTPVDFDQVFGRSAPRTLEIGFGMGHSLLEMAAASPEQDFIGVEVHYPGVGAMLNGVLTQGLTNVRVYDCDAIEVLNRCIADNSLDRLMLFFPDPWHKSRHHKRRIVQPEFAALVRSKLKVGGVFHMATDWGPYAEYMLEVMSVAPGYRNQAEDNQYVPRPAERPITKFERRGEKLGHGVWDLKFEKVD.

Pro residues predominate over residues 1–11 (MTDTHVPPPEL). Positions 1–23 (MTDTHVPPPELPAAEEGEERPHR) are disordered. 4 residues coordinate S-adenosyl-L-methionine: E74, E99, D126, and D149. The active site involves D149. Substrate contacts are provided by residues K153, D185, and 222-225 (TKFE).

The protein belongs to the class I-like SAM-binding methyltransferase superfamily. TrmB family.

It catalyses the reaction guanosine(46) in tRNA + S-adenosyl-L-methionine = N(7)-methylguanosine(46) in tRNA + S-adenosyl-L-homocysteine. It participates in tRNA modification; N(7)-methylguanine-tRNA biosynthesis. Catalyzes the formation of N(7)-methylguanine at position 46 (m7G46) in tRNA. This chain is tRNA (guanine-N(7)-)-methyltransferase, found in Pseudomonas syringae pv. tomato (strain ATCC BAA-871 / DC3000).